A 281-amino-acid chain; its full sequence is Nucleotide-binding protein TRQ2_1124 (281 aa).

9-16 provides a ligand contact to ATP; that stretch reads GLSGAGKT. Residue 58–61 participates in GTP binding; that stretch reads DVRS.

It belongs to the RapZ-like family.

Displays ATPase and GTPase activities. In Thermotoga sp. (strain RQ2), this protein is Nucleotide-binding protein TRQ2_1124.